A 113-amino-acid polypeptide reads, in one-letter code: Prefoldin subunit beta (113 aa).

The protein belongs to the prefoldin subunit beta family. In terms of assembly, heterohexamer of two alpha and four beta subunits.

It is found in the cytoplasm. Its function is as follows. Molecular chaperone capable of stabilizing a range of proteins. Seems to fulfill an ATP-independent, HSP70-like function in archaeal de novo protein folding. This chain is Prefoldin subunit beta, found in Methanococcus maripaludis (strain C7 / ATCC BAA-1331).